We begin with the raw amino-acid sequence, 178 residues long: Deoxycytidylate deaminase (178 aa).

Residues E14–F145 enclose the CMP/dCMP-type deaminase domain. Residue H84 coordinates Zn(2+). The Proton donor role is filled by E86. Zn(2+) is bound by residues C110 and C113. Phosphoserine is present on S174.

Belongs to the cytidine and deoxycytidylate deaminase family. As to quaternary structure, homohexamer. Zn(2+) serves as cofactor.

The enzyme catalyses dCMP + H2O + H(+) = dUMP + NH4(+). The catalysed reaction is 5-hydroxymethyl-dCMP + H2O + H(+) = 5-hydroxymethyl-dUMP + NH4(+). Allosteric enzyme whose activity is greatly influenced by the end products of its metabolic pathway, dCTP and dTTP. Functionally, catalyzes the deamination of dCMP to dUMP, providing the nucleoside monophosphate substrate for the thymidylate synthase/TYMS. Also, part of a nucleotide salvage pathway that eliminates epigenetically modified 5-hydroxymethyl-dCMP (hmdCMP) in a two-step process entailing deamination to cytotoxic 5-hydroxymethyl-dUMP (hmdUMP), followed by its hydrolysis into 5-hydroxymethyluracil (hmU) and 2-deoxy-D-ribose 5-phosphate (deoxyribosephosphate). Catalyzes the first step in that pathway, the deamination of 5-hydroxymethyl-dCMP (hmdCMP). This Mus musculus (Mouse) protein is Deoxycytidylate deaminase.